The sequence spans 205 residues: Adenylyl-sulfate kinase (205 aa).

31–38 provides a ligand contact to ATP; the sequence is GLSGAGKS. The active-site Phosphoserine intermediate is the S105.

It belongs to the APS kinase family.

The catalysed reaction is adenosine 5'-phosphosulfate + ATP = 3'-phosphoadenylyl sulfate + ADP + H(+). The protein operates within sulfur metabolism; hydrogen sulfide biosynthesis; sulfite from sulfate: step 2/3. Its function is as follows. Catalyzes the synthesis of activated sulfate. The polypeptide is Adenylyl-sulfate kinase (Shewanella sp. (strain ANA-3)).